The following is an 89-amino-acid chain: Bacterial microcompartment shell vertex protein GrpN (89 aa).

A BMV domain is found at 1-83 (MYLGKVIGTV…IDAAVVGIVD (83 aa)).

It belongs to the CcmL/EutN family. In terms of assembly, homopentamer with a small central pore.

The protein localises to the bacterial microcompartment. In terms of biological role, probably forms vertices in the bacterial microcompartment (BMC) predicted to be involved in glycyl radical-based 1,2-propanediol metabolism in this organism. In Rhodospirillum rubrum (strain F11), this protein is Bacterial microcompartment shell vertex protein GrpN.